A 1891-amino-acid chain; its full sequence is MTSRLLETGSTPFIRNTAAQQLADVQKQHPDELFNLLGRILPYLRSKSWDTRAAAAKAIGLIVANADTFDPNQDDGQEIKKAENDDLDVDIKSEEELLSPMDDSLLQLERLDLPSILKYGKRLLGSAGKEYEYSLAAMDPASRLQHQKKTLTSRLGLAGEYIEEDLINDNDLVSKPVVKEEPSFVASREHSIQGTSQPLASPIEPANGEESGLSKRQLNQLKRKNKQSARMGANKVRVVDLSSRRASENVTTPSVATPYPIKSENGEERNGDSKPDYFSLDRSAGDDESKIVSEFKGASVPENPLLQPESTEEGPNPNWPFELMCDILMVDLFDPNWEIRHGAAMALREVIRIQGAGAGRVQGKSRAENDILNRKWLDDLACRLLCVLMLDRFGDYISDNVVAPIRETVGQTLGALLSQLPSRSVISVYKCLYRIIMQTDLGLERPIWEVCHGGMIGLRYLVAVRKDLLIKDSKLMDGVLEAVMKGLGDYDDDVRAVSAATLVPIAEEFVKTRQSTLGTLMTIVWDCLSNLQDDLSASTGSVMDLLAKLCTFQEVLDAMKANAAVNPESSFGKLVPRLYPFLRHTITSVRSAVLRALMTFLQLEGEGTDEWVDGKTVRLIFQNLLVERNEGVLKQSLQVWSELLNSLETRGSFKSESDLLSHIKPLITLSMGPFGVPRYPVPMDASLFIKPSGLPFPSSAAAPARSSPASNTPEGTKGRRRKSEKKEAPPPSAHNVDGHMLQGDIDLVGADTMLRSKIYAARALGQLLFVWDQNQLPSLWQSILEGLNHSASTSQLASAMIVEEYAKLSGPSGRYASTLCENLRPIIEGERPPWYSDIACYLHVARAQCHSLLNTFRDHAHVPGSRLPVLAVIVQGDPEAGPNAFSLSDAEKVIGPDFERLKKGLTPAQRITALQVLNDTRATAESAVNEARNAREQRDLRVRAAAAGALVALSDIPKKPSHIIKGMMDSIKKEENAELQQRSATAITSLVEYYTTSAKRGPVDKVIGNLVKYCCVDTSETPEFHHNAMLEKSILSLRKEEDRRDHPDAAKFEREAKEARIMRRGAKEALEQLAVKFGSELMAKVPNLASLIERPLKEALAADELPANIRDPENELGQEVVDGLSTLRAILPKFHSGLYPWVVDLLPLVVKALQCNLSVIRYAAAKCFATICSVITVEGMTMLVEKVLPMINDALDVHHRQGAVECIYHLIHVMEDGILPYVIFLVVPVLGRMSDSDNEVRLLATTSFATLVKLVPLEAGIPDPPGLSEELLKGRDRERQFMAQMLDVRKVEEFKIPVAIKAELRPYQQEGVNWLAFLNRYNLHGILCDDMGLGKTLQTICIVASDHHMRAEEFARTQKPEVRKLPSLIVCPPSLSGHWQQELKQYAPFLNCVAYVGPPAERSRLQSALPNADIVVTSYDICRNDNEVLNPINWNYCVLDEGHLIKNPKAKATIAVKRLLSNHRLILSGTPIQNNVLELWSLFDFLMPGFLGTEKVFLDRFAKPIAASRFSKSSSKEQEAGALAIEALHKQVLPFLLRRLKEEVLNDLPPKIIQNYYCDPSELQRKLFEDFTKKEQKALQDKVGSTEKADKEHIFQALQYMRRLCNSPALVVKEGHKQYNEVQQYLAAKHSNIRDVAHAPKLSALRDLLIDCGIGVDSPSEGDLSGASYVSPHRALIFCQMKEMLDIVQSEVFNKLLPSVQFLRLDGSVEATRRQDIVNRFNTDPSYDVLLLTTSVGGLGLNLTGADTVIFVEHDWNPQKDIQAMDRAHRIGQKKVVNVYRLITRGTLEEKILNLQRFKIDVASTVVNQQNAGLGTMDTDQLLDLFNLGETAETAEKPSDAAGNEVDMVDIDGNVKEKGKKGWLDDLGELWDDRQYQEEYNLDSFLATMKG.

One copy of the HEAT 1 repeat lies at P30 to T68. Disordered regions lie at residues F184–R216, L241–S283, and F295–N316. Positions E264–P275 are enriched in basic and acidic residues. HEAT repeat units follow at residues S473–K511 and S569–E606. Residues S699 to S710 show a composition bias toward low complexity. The tract at residues S699–M740 is disordered. HEAT repeat units follow at residues P957–T996, Y1139–V1177, T1181–D1216, and L1219–L1257. Positions A1316–G1489 constitute a Helicase ATP-binding domain. D1329–T1336 is an ATP binding site. Residues D1440 to H1443 carry the DEAH box motif. An HEAT 8 repeat occupies E1526–R1565. In terms of domain architecture, Helicase C-terminal spans D1663–G1813.

It belongs to the SNF2/RAD54 helicase family. As to quaternary structure, forms the NCT transcriptional regulatory complex with nctA and nctB.

The protein resides in the nucleus. Its function is as follows. Regulates transcription in association with TATA binding protein (TBP). Removes TBP from the TATA box via its C-terminal ATPase activity. Both transcription activation and repression require its ATPase activity. Part of the NCT transcriptional regulatory complex that acts as a key regulator of ergosterol biosynthesis and the azole exporter cdr1B. The NCT complex binds the promoters of genes linked to azole susceptibility, and especially represses the expression of cdr1B transporter. This chain is TATA-binding protein-associated factor mot1, found in Aspergillus fumigatus (strain ATCC MYA-4609 / CBS 101355 / FGSC A1100 / Af293) (Neosartorya fumigata).